The primary structure comprises 505 residues: Aspartyl/glutamyl-tRNA(Asn/Gln) amidotransferase subunit B (505 aa).

The protein belongs to the GatB/GatE family. GatB subfamily. In terms of assembly, heterotrimer of A, B and C subunits.

The enzyme catalyses L-glutamyl-tRNA(Gln) + L-glutamine + ATP + H2O = L-glutaminyl-tRNA(Gln) + L-glutamate + ADP + phosphate + H(+). The catalysed reaction is L-aspartyl-tRNA(Asn) + L-glutamine + ATP + H2O = L-asparaginyl-tRNA(Asn) + L-glutamate + ADP + phosphate + 2 H(+). In terms of biological role, allows the formation of correctly charged Asn-tRNA(Asn) or Gln-tRNA(Gln) through the transamidation of misacylated Asp-tRNA(Asn) or Glu-tRNA(Gln) in organisms which lack either or both of asparaginyl-tRNA or glutaminyl-tRNA synthetases. The reaction takes place in the presence of glutamine and ATP through an activated phospho-Asp-tRNA(Asn) or phospho-Glu-tRNA(Gln). This chain is Aspartyl/glutamyl-tRNA(Asn/Gln) amidotransferase subunit B, found in Kineococcus radiotolerans (strain ATCC BAA-149 / DSM 14245 / SRS30216).